The chain runs to 264 residues: Stress response regulator protein 1 (264 aa).

The segment at 50–74 (IYSDCDNNKNNNDDDDDDDDYNKDT) is disordered. A compositionally biased stretch (acidic residues) spans 62–74 (DDDDDDDDYNKDT). The Response regulatory domain maps to 138–256 (RFLIVDDNII…LDLIGGSIDD (119 aa)). At aspartate 189 the chain carries 4-aspartylphosphate.

In terms of biological role, required for stress adaptation, morphogenesis and virulence. The sequence is that of Stress response regulator protein 1 (SRR1) from Candida tropicalis (strain ATCC MYA-3404 / T1) (Yeast).